A 55-amino-acid polypeptide reads, in one-letter code: UPF0434 protein Erum1340/ERWE_CDS_01300 (55 aa).

It belongs to the UPF0434 family.

The sequence is that of UPF0434 protein Erum1340/ERWE_CDS_01300 from Ehrlichia ruminantium (strain Welgevonden).